Consider the following 121-residue polypeptide: Basic phospholipase A2 BbTX-III (121 aa).

Residues Tyr-27, Gly-29, and Gly-31 each coordinate Ca(2+). Cystine bridges form between Cys-28/Cys-44, Cys-43/Cys-95, Cys-49/Cys-121, Cys-50/Cys-88, Cys-58/Cys-82, and Cys-76/Cys-86. His-47 is an active-site residue. Residue Asp-48 coordinates Ca(2+). Asp-89 is a catalytic residue.

This sequence belongs to the phospholipase A2 family. Group II subfamily. D49 sub-subfamily. In terms of assembly, homodimer; non-covalently linked. The cofactor is Ca(2+). As to expression, expressed by the venom gland.

The protein localises to the secreted. The enzyme catalyses a 1,2-diacyl-sn-glycero-3-phosphocholine + H2O = a 1-acyl-sn-glycero-3-phosphocholine + a fatty acid + H(+). Functionally, snake venom phospholipase A2 (PLA2) that exhibits myotoxin and anticoagulant activity. Displays edema-inducing activities in mouse paw. Also displays cytotoxic activity against some cell lines and myotubes, and antimicrobial activities against E.coli, C.albicans and Leishmania. PLA2 catalyzes the calcium-dependent hydrolysis of the 2-acyl groups in 3-sn-phosphoglycerides. The protein is Basic phospholipase A2 BbTX-III of Bothrops brazili (Brazil's lancehead).